The primary structure comprises 672 residues: MLRTSLRSVRALGSRPSAAVAGRQWQATVVRRAAVSGQRFFADDKKPVVPEPSQPAVLPASETLTSPSTPPPASPQVEPTSTVPPETTPLTPPTPEATVIPPVAEEPVVPPTLPTPRKKKGFFRRLRNFFLSLTILGAIAFGGGVYYSRINDAFHDFFTEYIPYGEQAVLYLEELDFKKRFPDVVSRVTGRPRDSGEQVKVPAQSGASWRVASGGEPAGRQSSSIKKAGAAAQDAVPKSEPAVVAAAKEDTAELPKTEATTTATPAEPAPAPAATDASGTPVKKPFKAPEVDEPSRWPPASPIDPLTVNGATDPIVQDLVKMLNDVITVINHDNANEKYAPTICKAKNELSKVADKINEMKAKVEADAAKQVKARVDGFDKAANELVSRVESAMAAQEAAWRREFEEEITRLKKSYDEKVHLIQDREHQIAEEKLNNRLLEQAIQLQRQFTENIKKHVEQERDGRLGKLNELHKAVAELERLTSGLNEVVDTNLRTQQLHVAVDAVRASLEDAHHPRPFIKELVALKEIAADDPVVDAAIASINPTAYQRGIPTTAELIDRFRRVATEVRKASLLPEDAGVASHASSYVLSKLMFKKEGLAAGDDVESILTRTQTYLEEGDLDNAAREMNGLKGWAKTLSRDWLGEVRKVLEVQQALDVIQAEARLQSLRVE.

A mitochondrion-targeting transit peptide spans M1 to V48. Residues D43 to T112 are disordered. Residues V49–R125 are Mitochondrial matrix-facing. Composition is skewed to low complexity over residues L58–P67 and P75–P85. The segment covering E86–P95 has biased composition (pro residues). Over residues E96–P107 the composition is skewed to low complexity. Residues L126–S148 traverse the membrane as a helical segment. Residues R149–E672 are Mitochondrial intermembrane-facing. The tract at residues T189 to P305 is disordered. The segment covering A247 to K256 has biased composition (basic and acidic residues). The span at T257–P281 shows a compositional bias: low complexity. Residues R403 to V489 adopt a coiled-coil conformation.

The protein belongs to the MICOS complex subunit Mic60 family. As to quaternary structure, component of the mitochondrial contact site and cristae organizing system (MICOS) complex.

It localises to the mitochondrion inner membrane. Component of the MICOS complex, a large protein complex of the mitochondrial inner membrane that plays crucial roles in the maintenance of crista junctions, inner membrane architecture, and formation of contact sites to the outer membrane. Plays a role in keeping cristae membranes connected to the inner boundary membrane. Also promotes protein import via the mitochondrial intermembrane space assembly (MIA) pathway. The protein is MICOS complex subunit mic60 (mic60) of Neurospora crassa (strain ATCC 24698 / 74-OR23-1A / CBS 708.71 / DSM 1257 / FGSC 987).